The sequence spans 320 residues: Putative polysaccharide deacetylase (320 aa).

The NodB homology domain occupies 69–303; that stretch reads RSIESCFEYG…ITSKEGVWVA (235 aa).

Belongs to the polysaccharide deacetylase family. Homodimer.

The protein localises to the prospore. May deacetylate chitin. Required for spore formation. This chain is Putative polysaccharide deacetylase, found in Schizosaccharomyces pombe (strain 972 / ATCC 24843) (Fission yeast).